The following is a 143-amino-acid chain: Zinc-containing ferredoxin (143 aa).

Positions 13-60 (PIDEHFLENDKDYPVTGQHNGHDVRAEGMQRLDADGKPYPTKLGIHGT) are N-terminal extension. Positions 31, 34, and 58 each coordinate Zn(2+). 2 4Fe-4S ferredoxin-type domains span residues 60–89 (THVAVDWDCCIADGACMDVCPVNLYEWNLN) and 115–143 (KCDPVRESDCIFCMACESVCPVRAIKITP). [3Fe-4S] cluster is bound by residues Cys-69 and Cys-75. Cys-79 contributes to the [4Fe-4S] cluster binding site. Asp-117 serves as a coordination point for Zn(2+). Residues Cys-124, Cys-127, and Cys-130 each coordinate [4Fe-4S] cluster. Cys-134 is a [3Fe-4S] cluster binding site.

It depends on [3Fe-4S] cluster as a cofactor. Requires [4Fe-4S] cluster as cofactor. The cofactor is Zn(2+).

Its function is as follows. Ferredoxins are iron-sulfur proteins that transfer electrons in a wide variety of metabolic reactions. This is Zinc-containing ferredoxin (zfx) from Thermoplasma acidophilum (strain ATCC 25905 / DSM 1728 / JCM 9062 / NBRC 15155 / AMRC-C165).